The following is a 471-amino-acid chain: Tryptophanase (471 aa).

The residue at position 270 (Lys-270) is an N6-(pyridoxal phosphate)lysine.

The protein belongs to the beta-eliminating lyase family. Homotetramer. Pyridoxal 5'-phosphate serves as cofactor.

The catalysed reaction is L-tryptophan + H2O = indole + pyruvate + NH4(+). Its pathway is amino-acid degradation; L-tryptophan degradation via pyruvate pathway; indole and pyruvate from L-tryptophan: step 1/1. This Histophilus somni (strain 129Pt) (Haemophilus somnus) protein is Tryptophanase.